Consider the following 330-residue polypeptide: Protein qutG (330 aa).

Mg(2+) contacts are provided by Glu-78, Asp-100, Leu-102, Asp-103, and Asp-251. Glu-78 is a binding site for substrate. Substrate-binding positions include 102–105 (LDGT) and Asp-251.

The protein belongs to the inositol monophosphatase superfamily.

Functionally, not known. Probably involved in quinate metabolism. This is Protein qutG (qutG) from Emericella nidulans (strain FGSC A4 / ATCC 38163 / CBS 112.46 / NRRL 194 / M139) (Aspergillus nidulans).